We begin with the raw amino-acid sequence, 177 residues long: Large ribosomal subunit protein uL6 (177 aa).

This sequence belongs to the universal ribosomal protein uL6 family. In terms of assembly, part of the 50S ribosomal subunit.

Its function is as follows. This protein binds to the 23S rRNA, and is important in its secondary structure. It is located near the subunit interface in the base of the L7/L12 stalk, and near the tRNA binding site of the peptidyltransferase center. The polypeptide is Large ribosomal subunit protein uL6 (Yersinia enterocolitica serotype O:8 / biotype 1B (strain NCTC 13174 / 8081)).